The sequence spans 331 residues: Nucleotide sugar transporter SLC35B4 (331 aa).

Transmembrane regions (helical) follow at residues 4–24 (ALAVGLVFAGCCSNVIFLELL), 30–50 (GCGNIVTFAQFLFIAVEGFLF), 59–79 (PAIPIRYYAIMVTMFFTVSVV), 92–112 (LHMIFRSGSLIANMILGIIIL), 117–137 (SIFKYTSIALVSVGIFICTFM), 153–173 (GFQAFVWWLLGIGALTFALLM), 201–221 (ALPLPGFVFLASDIYDHAVLF), 229–249 (IPVIGVTLPIMWFYLLMNIIT), 251–267 (YVCIRGVFILTTECASL), 268–288 (TVTLVVTLRKFVSLIFSILYF), and 291–311 (PFTLWHWLGTLFVFIGTLMYT). The Mediates endoplasmic reticulum retention signature appears at 326 to 331 (KDSKKN).

It belongs to the nucleotide-sugar transporter family. SLC35B subfamily.

It is found in the endoplasmic reticulum membrane. It catalyses the reaction UDP-N-acetyl-alpha-D-glucosamine(in) + UDP-alpha-D-glucuronate(out) = UDP-N-acetyl-alpha-D-glucosamine(out) + UDP-alpha-D-glucuronate(in). It carries out the reaction UDP-alpha-D-xylose(in) + UDP-alpha-D-glucuronate(out) = UDP-alpha-D-xylose(out) + UDP-alpha-D-glucuronate(in). Functionally, antiporter that transports nucleotide sugars across the endoplasmic reticulum (ER) membrane in exchange for another nucleotide sugar. May couple UDP-alpha-D-glucuronate (UDP-GlcA) or UDP-alpha-D-xylose (UDP-Xyl) efflux to UDP-alpha-D-glucuronate (UDP-GlcA) influx into the ER lumen, which in turn stimulates glucuronidation and excretion of endobiotics and xenobiotics. In Pongo abelii (Sumatran orangutan), this protein is Nucleotide sugar transporter SLC35B4 (SLC35B4).